Here is a 76-residue protein sequence, read N- to C-terminus: Omega-scoloptoxin(13)-Ssm2a (76 aa).

The N-terminal stretch at 1–22 (MAYIYALIFAIVVCMNTDVIQA) is a signal peptide.

Contains 4 disulfide bonds. In terms of tissue distribution, expressed by the venom gland.

It localises to the secreted. Inhibits voltage-gated calcium channel (Cav) currents in DRG neurons (IC(50)=1590 nM). In Scolopendra mutilans (Chinese red-headed centipede), this protein is Omega-scoloptoxin(13)-Ssm2a.